We begin with the raw amino-acid sequence, 252 residues long: Small ribosomal subunit protein uS3 (252 aa).

Positions 39-111 (IRKLINNFAK…EVNLNVLEVK (73 aa)) constitute a KH type-2 domain. The interval 222-252 (KPFASQSSNTPNRRPRNFKGGNNNHVNAKKN) is disordered. The segment covering 241 to 252 (GGNNNHVNAKKN) has biased composition (polar residues).

The protein belongs to the universal ribosomal protein uS3 family. In terms of assembly, part of the 30S ribosomal subunit. Forms a tight complex with proteins S10 and S14.

Its function is as follows. Binds the lower part of the 30S subunit head. Binds mRNA in the 70S ribosome, positioning it for translation. This chain is Small ribosomal subunit protein uS3, found in Phytoplasma sp. (strain STRAWB2).